We begin with the raw amino-acid sequence, 50 residues long: Large ribosomal subunit protein eL39 (50 aa).

It belongs to the eukaryotic ribosomal protein eL39 family. In terms of assembly, part of the 50S ribosomal subunit. Interacts weakly with protein L23.

Its function is as follows. Binds to the 23S rRNA. Forms part of the polypeptide exit tunnel. The sequence is that of Large ribosomal subunit protein eL39 (rpl39e) from Haloarcula marismortui (strain ATCC 43049 / DSM 3752 / JCM 8966 / VKM B-1809) (Halobacterium marismortui).